The chain runs to 98 residues: Gibberellin-regulated protein 1 (98 aa).

The N-terminal stretch at 1–23 is a signal peptide; it reads MAISKALIASLLISLLVLQLVQA.

It belongs to the GASA family. In terms of processing, six disulfide bonds may be present. As to expression, expressed in flower buds, style, stamen filaments, vasculature of sepals, flower abscission zone and green siliques. Lower levels seen in the root phloem, cotyledons and vasculature of rosette leaves.

The protein resides in the secreted. Its function is as follows. Gibberellin-regulated protein that may function in hormonal controlled steps of development such as seed germination, flowering and seed maturation. The polypeptide is Gibberellin-regulated protein 1 (GASA1) (Arabidopsis thaliana (Mouse-ear cress)).